We begin with the raw amino-acid sequence, 221 residues long: MSDGDYDYLIKFLALGDSGVGKTSVLYQYTDGKFNSKFITTVGIDFREKRVVYRANGPDGAVGRGQRIHLQLWDTAGQERFRSLTTAFFRDAMGFLLLFDLTNEQSFLNVRNWISQLQMHAYCENPDIVLCGNKSDLEDQRAVKEEEARELAEKYGIPYFETSAANGTNISHAIEMLLDLIMKRMERCVDKSWIPEGVVRSNGHTSADQLSEEKEKGLCGC.

Ser-2 carries the N-acetylserine modification. Position 2 is a phosphoserine (Ser-2). 16–24 (GDSGVGKTS) contributes to the GTP binding site. Residues 38–46 (FITTVGIDF) carry the Effector region motif. GTP contacts are provided by residues 74–78 (DTAGQ), 133–136 (NKSD), and 163–165 (SAA). Cys-123 and Cys-188 are oxidised to a cystine. 2 S-geranylgeranyl cysteine lipidation sites follow: Cys-219 and Cys-221. Cys-221 bears the Cysteine methyl ester mark.

It belongs to the small GTPase superfamily. Rab family. In terms of assembly, binds SYTL1, SYTL2, SLAC2B, MYRIP, SYTL3, SYTL4, SYTL5 and MLPH. Interacts with UNC13D. Interacts with RPH3A and RPH3A. Does not interact with the BLOC-3 complex (heterodimer of HPS1 and HPS4). Interacts (GDP-bound form preferentially) with DENND10. In terms of tissue distribution, detected in melanocytes. Expressed abundantly in the stomach and is predominantly localized at the apical region of gastric-surface mucus cells. Also expressed in the thymus and lung.

The protein resides in the membrane. It localises to the melanosome. It is found in the late endosome. The protein localises to the lysosome. The enzyme catalyses GTP + H2O = GDP + phosphate + H(+). With respect to regulation, regulated by guanine nucleotide exchange factors (GEFs) which promote the exchange of bound GDP for free GTP, GTPase activating proteins (GAPs) which increase the GTP hydrolysis activity, and GDP dissociation inhibitors which inhibit the dissociation of the nucleotide from the GTPase. Activated by GEFs such as DENND10. Small GTPase which cycles between active GTP-bound and inactive GDP-bound states. In its active state, binds to a variety of effector proteins to regulate homeostasis of late endocytic pathway, including endosomal positioning, maturation and secretion. Plays a role in cytotoxic granule exocytosis in lymphocytes. Required for both granule maturation and granule docking and priming at the immunologic synapse. The chain is Ras-related protein Rab-27A (Rab27a) from Mus musculus (Mouse).